We begin with the raw amino-acid sequence, 91 residues long: UPF0250 protein Lcho_4239 (91 aa).

Belongs to the UPF0250 family.

This chain is UPF0250 protein Lcho_4239, found in Leptothrix cholodnii (strain ATCC 51168 / LMG 8142 / SP-6) (Leptothrix discophora (strain SP-6)).